The following is a 744-amino-acid chain: FHF complex subunit HOOK-interacting protein 2B (744 aa).

2 disordered regions span residues 184 to 213 (KTAR…LNRD) and 510 to 530 (LDSG…SSDG). Over residues 197–213 (AGYRDKDCPHSDALNRD) the composition is skewed to basic and acidic residues.

The protein belongs to the FHIP family. In terms of tissue distribution, expressed in colon.

Functionally, able to activate MAPK/ERK and TGFB signaling pathways. May regulate the activity of genes involved in intestinal barrier function and immunoprotective inflammation. May play a role in cell proliferation. The chain is FHF complex subunit HOOK-interacting protein 2B from Mus musculus (Mouse).